The primary structure comprises 352 residues: Phosphoribosylformylglycinamidine cyclo-ligase (352 aa).

Belongs to the AIR synthase family.

It localises to the cytoplasm. The catalysed reaction is 2-formamido-N(1)-(5-O-phospho-beta-D-ribosyl)acetamidine + ATP = 5-amino-1-(5-phospho-beta-D-ribosyl)imidazole + ADP + phosphate + H(+). It functions in the pathway purine metabolism; IMP biosynthesis via de novo pathway; 5-amino-1-(5-phospho-D-ribosyl)imidazole from N(2)-formyl-N(1)-(5-phospho-D-ribosyl)glycinamide: step 2/2. This Nitrosospira multiformis (strain ATCC 25196 / NCIMB 11849 / C 71) protein is Phosphoribosylformylglycinamidine cyclo-ligase.